The chain runs to 148 residues: Putative carbonic anhydrase (148 aa).

One can recognise an Alpha-carbonic anhydrase domain in the interval 1-146; that stretch reads CLKRLQPGEM…LNGRTVFEVH (146 aa).

The protein belongs to the alpha-carbonic anhydrase family. Zn(2+) serves as cofactor. As to expression, component of the acid-insoluble organic matrix of the aragonitic skeleton (at protein level).

Its subcellular location is the secreted. The catalysed reaction is hydrogencarbonate + H(+) = CO2 + H2O. Functionally, reversible hydration of carbon dioxide. This chain is Putative carbonic anhydrase, found in Acropora millepora (Staghorn coral).